Consider the following 291-residue polypeptide: Formamidopyrimidine-DNA glycosylase (291 aa).

The active-site Schiff-base intermediate with DNA is the proline 2. Glutamate 3 serves as the catalytic Proton donor. The active-site Proton donor; for beta-elimination activity is the lysine 58. 3 residues coordinate DNA: histidine 100, arginine 123, and lysine 166. The FPG-type zinc-finger motif lies at 257-291 (SVYGREGKECLQCGTPIIRILQSGRSSFYCSQCQK). Catalysis depends on arginine 281, which acts as the Proton donor; for delta-elimination activity.

The protein belongs to the FPG family. In terms of assembly, monomer. It depends on Zn(2+) as a cofactor.

The enzyme catalyses Hydrolysis of DNA containing ring-opened 7-methylguanine residues, releasing 2,6-diamino-4-hydroxy-5-(N-methyl)formamidopyrimidine.. It catalyses the reaction 2'-deoxyribonucleotide-(2'-deoxyribose 5'-phosphate)-2'-deoxyribonucleotide-DNA = a 3'-end 2'-deoxyribonucleotide-(2,3-dehydro-2,3-deoxyribose 5'-phosphate)-DNA + a 5'-end 5'-phospho-2'-deoxyribonucleoside-DNA + H(+). Its function is as follows. Involved in base excision repair of DNA damaged by oxidation or by mutagenic agents. Acts as a DNA glycosylase that recognizes and removes damaged bases. Has a preference for oxidized purines, such as 7,8-dihydro-8-oxoguanine (8-oxoG). Has AP (apurinic/apyrimidinic) lyase activity and introduces nicks in the DNA strand. Cleaves the DNA backbone by beta-delta elimination to generate a single-strand break at the site of the removed base with both 3'- and 5'-phosphates. This Bartonella tribocorum (strain CIP 105476 / IBS 506) protein is Formamidopyrimidine-DNA glycosylase.